Reading from the N-terminus, the 175-residue chain is DDB1- and CUL4-associated factor 16 (175 aa).

A disordered region spans residues 1–42; sequence MGPRNPSPDPLSESESEEEENTNYLNESSGEEWDSSEEEDPV. Composition is skewed to acidic residues over residues 12 to 21 and 29 to 41; these read SESESEEEEN and SGEE…EEDP. At lysine 61 the chain carries N6-acetyllysine.

Interacts with DDB1 and CUL4A.

Its subcellular location is the nucleus. The protein operates within protein modification; protein ubiquitination. In terms of biological role, functions as a substrate recognition component for CUL4-DDB1 E3 ubiquitin-protein ligase complex, which mediates ubiquitination and proteasome-dependent degradation of nuclear proteins. This Bos taurus (Bovine) protein is DDB1- and CUL4-associated factor 16 (DCAF16).